The chain runs to 447 residues: Phosphoglucosamine mutase (447 aa).

S108 acts as the Phosphoserine intermediate in catalysis. 4 residues coordinate Mg(2+): S108, D247, D249, and D251. Position 108 is a phosphoserine (S108).

Belongs to the phosphohexose mutase family. It depends on Mg(2+) as a cofactor. Post-translationally, activated by phosphorylation.

The catalysed reaction is alpha-D-glucosamine 1-phosphate = D-glucosamine 6-phosphate. Catalyzes the conversion of glucosamine-6-phosphate to glucosamine-1-phosphate. In Bordetella avium (strain 197N), this protein is Phosphoglucosamine mutase.